The primary structure comprises 549 residues: Cation/acetate symporter ActP (549 aa).

The next 13 membrane-spanning stretches (helical) occupy residues 33-53, 77-97, 103-123, 148-168, 183-203, 206-226, 262-282, 303-323, 355-375, 404-424, 428-448, 464-484, and 493-513; these read WQAIIMFLIFVVFTLGITYWA, LAIAGDYMSAASFLGISALVF, GLIYSLGFLVGWPIILFLIAE, ILSACGSLVVVALYLIAQMVG, IAVVLVGVLMMMYVLFGGMLA, WVQIIKAVLLLFGASFMAFMV, ISALSLGLGLMFGTAGLPHIL, GFMGYFYILTFIIGFGAIMLV, LFLGFISAVAFATILAVVAGL, VSKITVLVLGVIAIILGILFE, IAFMVGLAFAIAASCNFPIIL, GGWLGLLTAVVLMILGPTIWV, and IFPYEYPALFSISVAFLGIWF.

Belongs to the sodium:solute symporter (SSF) (TC 2.A.21) family.

It is found in the cell inner membrane. Functionally, transports acetate. The sequence is that of Cation/acetate symporter ActP from Salmonella newport (strain SL254).